The sequence spans 277 residues: Large ribosomal subunit protein uL2 (277 aa).

The segment at 211–277 (SRWKGVRPTV…KLIVRGRKKK (67 aa)) is disordered.

It belongs to the universal ribosomal protein uL2 family. Part of the 50S ribosomal subunit. Forms a bridge to the 30S subunit in the 70S ribosome.

Functionally, one of the primary rRNA binding proteins. Required for association of the 30S and 50S subunits to form the 70S ribosome, for tRNA binding and peptide bond formation. It has been suggested to have peptidyltransferase activity; this is somewhat controversial. Makes several contacts with the 16S rRNA in the 70S ribosome. The protein is Large ribosomal subunit protein uL2 of Staphylococcus epidermidis (strain ATCC 35984 / DSM 28319 / BCRC 17069 / CCUG 31568 / BM 3577 / RP62A).